We begin with the raw amino-acid sequence, 366 residues long: Glutamate 5-kinase (366 aa).

ATP is bound at residue Lys-17. Substrate is bound by residues Ser-57, Asp-144, and Asn-156. ATP-binding positions include 176–177 (SD) and 216–222 (TGGMASK). One can recognise a PUA domain in the interval 278–352 (RGALVLDDGA…GRSTTELPDT (75 aa)).

It belongs to the glutamate 5-kinase family.

The protein localises to the cytoplasm. It catalyses the reaction L-glutamate + ATP = L-glutamyl 5-phosphate + ADP. It participates in amino-acid biosynthesis; L-proline biosynthesis; L-glutamate 5-semialdehyde from L-glutamate: step 1/2. Catalyzes the transfer of a phosphate group to glutamate to form L-glutamate 5-phosphate. This Nocardia farcinica (strain IFM 10152) protein is Glutamate 5-kinase.